The primary structure comprises 44 residues: Photosystem I reaction center subunit IX (44 aa).

A helical transmembrane segment spans residues Tyr-7–Ile-27.

It belongs to the PsaJ family.

The protein resides in the plastid. It is found in the chloroplast thylakoid membrane. Its function is as follows. May help in the organization of the PsaE and PsaF subunits. This chain is Photosystem I reaction center subunit IX, found in Lactuca sativa (Garden lettuce).